The sequence spans 327 residues: tRNA-modifying protein YgfZ (327 aa).

Residues Trp27 and Trp189 each contribute to the folate site.

It belongs to the tRNA-modifying YgfZ family.

Its subcellular location is the cytoplasm. Functionally, folate-binding protein involved in regulating the level of ATP-DnaA and in the modification of some tRNAs. It is probably a key factor in regulatory networks that act via tRNA modification, such as initiation of chromosomal replication. The polypeptide is tRNA-modifying protein YgfZ (Klebsiella pneumoniae (strain 342)).